Reading from the N-terminus, the 138-residue chain is Acidic phospholipase A2 Drk-a1 (138 aa).

Positions 1-16 (MRTLWIVAVCLIGVEG) are cleaved as a signal peptide. Cystine bridges form between Cys-42-Cys-131, Cys-44-Cys-60, Cys-59-Cys-111, Cys-65-Cys-138, Cys-66-Cys-104, Cys-73-Cys-97, and Cys-91-Cys-102. 3 residues coordinate Ca(2+): Tyr-43, Gly-45, and Gly-47. The active site involves His-63. Asp-64 is a binding site for Ca(2+). Asp-105 is an active-site residue.

Belongs to the phospholipase A2 family. Group II subfamily. D49 sub-subfamily. Ca(2+) serves as cofactor. Expressed by the venom gland.

It is found in the secreted. The enzyme catalyses a 1,2-diacyl-sn-glycero-3-phosphocholine + H2O = a 1-acyl-sn-glycero-3-phosphocholine + a fatty acid + H(+). In terms of biological role, snake venom phospholipase A2 (PLA2) that exhibits high hydrolytic activities and shows strong preference for the anionic micelles (dPPC with deoxycholate) to the zwitterionic micelles (dPPC with Triton X-100). PLA2 catalyzes the calcium-dependent hydrolysis of the 2-acyl groups in 3-sn-phosphoglycerides. In Daboia russelii (Russel's viper), this protein is Acidic phospholipase A2 Drk-a1.